The chain runs to 25 residues: Aurein-5.1 (25 aa).

This sequence belongs to the frog skin active peptide (FSAP) family. Aurein subfamily. As to expression, expressed by the skin dorsal glands.

It localises to the secreted. Its function is as follows. Has no antimicrobial or anticancer activity. The chain is Aurein-5.1 from Ranoidea aurea (Green and golden bell frog).